The primary structure comprises 453 residues: Ribulose bisphosphate carboxylase large chain (453 aa).

Residues 1 to 2 (MS) constitute a propeptide that is removed on maturation. Position 3 is an N-acetylproline (proline 3). Lysine 14 carries the post-translational modification N6,N6,N6-trimethyllysine. Residues asparagine 123 and threonine 173 each coordinate substrate. The active-site Proton acceptor is the lysine 175. Lysine 177 provides a ligand contact to substrate. Residues lysine 201, aspartate 203, and glutamate 204 each contribute to the Mg(2+) site. Lysine 201 carries the N6-carboxylysine modification. Residue histidine 294 is the Proton acceptor of the active site. Positions 295, 327, and 379 each coordinate substrate.

This sequence belongs to the RuBisCO large chain family. Type I subfamily. In terms of assembly, heterohexadecamer of 8 large chains and 8 small chains; disulfide-linked. The disulfide link is formed within the large subunit homodimers. Requires Mg(2+) as cofactor. In terms of processing, the disulfide bond which can form in the large chain dimeric partners within the hexadecamer appears to be associated with oxidative stress and protein turnover.

It localises to the plastid. The protein localises to the chloroplast. The catalysed reaction is 2 (2R)-3-phosphoglycerate + 2 H(+) = D-ribulose 1,5-bisphosphate + CO2 + H2O. It carries out the reaction D-ribulose 1,5-bisphosphate + O2 = 2-phosphoglycolate + (2R)-3-phosphoglycerate + 2 H(+). RuBisCO catalyzes two reactions: the carboxylation of D-ribulose 1,5-bisphosphate, the primary event in carbon dioxide fixation, as well as the oxidative fragmentation of the pentose substrate in the photorespiration process. Both reactions occur simultaneously and in competition at the same active site. The chain is Ribulose bisphosphate carboxylase large chain from Galium aparine (Catchweed bedstraw).